The chain runs to 360 residues: Phospho-N-acetylmuramoyl-pentapeptide-transferase (360 aa).

The next 10 helical transmembrane spans lie at 26-46, 72-92, 94-114, 132-152, 168-188, 199-219, 236-256, 263-283, 288-308, and 338-358; these read AIVS…RMIA, PTMG…LWAY, SNPY…IGFV, WKYF…YLAG, VMPQ…VGTG, GLAI…AWAT, AGEL…FLWF, VFMG…IAVL, FLLV…ILQV, and VIVR…ATLK.

Belongs to the glycosyltransferase 4 family. MraY subfamily. Mg(2+) serves as cofactor.

Its subcellular location is the cell inner membrane. It catalyses the reaction UDP-N-acetyl-alpha-D-muramoyl-L-alanyl-gamma-D-glutamyl-meso-2,6-diaminopimeloyl-D-alanyl-D-alanine + di-trans,octa-cis-undecaprenyl phosphate = di-trans,octa-cis-undecaprenyl diphospho-N-acetyl-alpha-D-muramoyl-L-alanyl-D-glutamyl-meso-2,6-diaminopimeloyl-D-alanyl-D-alanine + UMP. It participates in cell wall biogenesis; peptidoglycan biosynthesis. Catalyzes the initial step of the lipid cycle reactions in the biosynthesis of the cell wall peptidoglycan: transfers peptidoglycan precursor phospho-MurNAc-pentapeptide from UDP-MurNAc-pentapeptide onto the lipid carrier undecaprenyl phosphate, yielding undecaprenyl-pyrophosphoryl-MurNAc-pentapeptide, known as lipid I. In Citrobacter koseri (strain ATCC BAA-895 / CDC 4225-83 / SGSC4696), this protein is Phospho-N-acetylmuramoyl-pentapeptide-transferase.